Reading from the N-terminus, the 436-residue chain is Glutamyl-tRNA reductase (436 aa).

Residues 50–53 (TCNR), Ser110, 115–117 (ETQ), and Gln121 contribute to the substrate site. Cys51 acts as the Nucleophile in catalysis. Residue 190–195 (GLGEMS) participates in NADP(+) binding.

This sequence belongs to the glutamyl-tRNA reductase family. As to quaternary structure, homodimer.

It carries out the reaction (S)-4-amino-5-oxopentanoate + tRNA(Glu) + NADP(+) = L-glutamyl-tRNA(Glu) + NADPH + H(+). Its pathway is porphyrin-containing compound metabolism; protoporphyrin-IX biosynthesis; 5-aminolevulinate from L-glutamyl-tRNA(Glu): step 1/2. In terms of biological role, catalyzes the NADPH-dependent reduction of glutamyl-tRNA(Glu) to glutamate 1-semialdehyde (GSA). The protein is Glutamyl-tRNA reductase of Wolinella succinogenes (strain ATCC 29543 / DSM 1740 / CCUG 13145 / JCM 31913 / LMG 7466 / NCTC 11488 / FDC 602W) (Vibrio succinogenes).